A 259-amino-acid polypeptide reads, in one-letter code: L-erythrulose-1-phosphate isomerase (259 aa).

His-102 (electrophile) is an active-site residue. Residue Glu-174 is the Proton acceptor of the active site.

The protein belongs to the triosephosphate isomerase family.

The catalysed reaction is L-erythrulose 1-phosphate = D-erythrulose 4-phosphate. It functions in the pathway carbohydrate metabolism. In terms of biological role, involved in catabolism of D-apiose. Catalyzes the isomerization of L-erythrulose 1-phosphate to D-erythrulose 4-phosphate. The sequence is that of L-erythrulose-1-phosphate isomerase from Pectobacterium atrosepticum (strain SCRI 1043 / ATCC BAA-672) (Erwinia carotovora subsp. atroseptica).